The primary structure comprises 972 residues: Aminopeptidase N (972 aa).

Residues 2-17 lie on the Cytoplasmic side of the membrane; that stretch reads TSQGRTRTLLNLTPIR. Residues 18–39 traverse the membrane as a helical; Signal-anchor for type II membrane protein segment; it reads LIVALFLVAAAVGLSIGLTYYF. At 40-972 the chain is on the extracellular side; that stretch reads TRKAFDTSEK…LAAFFKKATL (933 aa). Over residues 47–62 the composition is skewed to basic and acidic residues; it reads SEKPGKDDTGGKDKDN. Positions 47–66 are disordered; sequence SEKPGKDDTGGKDKDNSPSA. N99 carries an N-linked (GlcNAc...) asparagine glycan. E208 contacts substrate. N-linked (GlcNAc...) asparagine glycosylation occurs at N227. 343–347 contacts substrate; sequence GAMEN. H379 is a Zn(2+) binding site. E380 (proton acceptor) is an active-site residue. Zn(2+)-binding residues include H383 and E402. N-linked (GlcNAc...) asparagine glycosylation is present at N549. 2 cysteine pairs are disulfide-bonded: C759–C766 and C804–C840. N-linked (GlcNAc...) asparagine glycosylation is present at N858.

This sequence belongs to the peptidase M1 family. Requires Zn(2+) as cofactor.

The protein localises to the membrane. The enzyme catalyses Release of an N-terminal amino acid, Xaa-|-Yaa- from a peptide, amide or arylamide. Xaa is preferably Ala, but may be most amino acids including Pro (slow action). When a terminal hydrophobic residue is followed by a prolyl residue, the two may be released as an intact Xaa-Pro dipeptide.. In Haemonchus contortus (Barber pole worm), this protein is Aminopeptidase N.